A 134-amino-acid polypeptide reads, in one-letter code: Putative pre-16S rRNA nuclease (134 aa).

Belongs to the YqgF nuclease family.

The protein localises to the cytoplasm. Functionally, could be a nuclease involved in processing of the 5'-end of pre-16S rRNA. The protein is Putative pre-16S rRNA nuclease of Helicobacter pylori (strain J99 / ATCC 700824) (Campylobacter pylori J99).